The following is a 93-amino-acid chain: Protein YzgL (93 aa).

The polypeptide is Protein YzgL (yzgL) (Escherichia coli (strain K12)).